The chain runs to 545 residues: POTE ankyrin domain family member H (545 aa).

ANK repeat units lie at residues 180 to 208 (LHRA…KKDK), 209 to 238 (QKRT…QLNI), 242 to 271 (KKRT…DPNI), 275 to 304 (YGNT…DIES), 308 to 337 (HGLT…NLNA), 341 to 370 (YGRT…DVSS), and 374 to 404 (SGQT…QILK). The segment at 406-524 (SSENSNPEQD…KQLSEEQNTG (119 aa)) is disordered. Composition is skewed to basic and acidic residues over residues 414-429 (QDLK…RLKG) and 443-458 (EINK…EMKK). Positions 513 to 524 (TQKQLSEEQNTG) are enriched in polar residues.

The protein belongs to the POTE family.

The sequence is that of POTE ankyrin domain family member H (POTEH) from Homo sapiens (Human).